Consider the following 169-residue polypeptide: uncharacterized protein (169 aa).

A Nudix hydrolase domain is found at 35-163 (LIGRGTFILL…PYCPDSLQAL (129 aa)). Residues 81-103 (YADSAARELEEELGIRDAVLREH) carry the Nudix box motif. Mg(2+)-binding residues include Glu-88 and Glu-92.

This sequence belongs to the Nudix hydrolase family. Mg(2+) serves as cofactor.

This is an uncharacterized protein from Pseudomonas aeruginosa (strain ATCC 15692 / DSM 22644 / CIP 104116 / JCM 14847 / LMG 12228 / 1C / PRS 101 / PAO1).